A 122-amino-acid chain; its full sequence is MQRIMLRAKLHRVTVTEADLHYEGSCGIDEDLLDAAGMREFERIELYNVTNGERFDTYIIKAARGSGAISLNGAAARRAQVGDLMIICTYGPMSEEESATHKPKVVLVDDANRVKEIRKFPA.

Ser25 acts as the Schiff-base intermediate with substrate; via pyruvic acid in catalysis. Ser25 bears the Pyruvic acid (Ser) mark. Residue Thr57 coordinates substrate. Catalysis depends on Tyr58, which acts as the Proton donor. 73 to 75 (GAA) is a substrate binding site.

It belongs to the PanD family. Heterooctamer of four alpha and four beta subunits. Requires pyruvate as cofactor. Is synthesized initially as an inactive proenzyme, which is activated by self-cleavage at a specific serine bond to produce a beta-subunit with a hydroxyl group at its C-terminus and an alpha-subunit with a pyruvoyl group at its N-terminus.

The protein resides in the cytoplasm. The enzyme catalyses L-aspartate + H(+) = beta-alanine + CO2. The protein operates within cofactor biosynthesis; (R)-pantothenate biosynthesis; beta-alanine from L-aspartate: step 1/1. Catalyzes the pyruvoyl-dependent decarboxylation of aspartate to produce beta-alanine. In Bordetella avium (strain 197N), this protein is Aspartate 1-decarboxylase.